A 398-amino-acid polypeptide reads, in one-letter code: S-adenosylmethionine synthase (398 aa).

His-16 is an ATP binding site. Asp-18 contributes to the Mg(2+) binding site. Glu-51 contacts K(+). Positions 64 and 108 each coordinate L-methionine. The segment at 108 to 118 is flexible loop; sequence QSADIAQGVDA. Residues 176–178, 242–243, Asp-251, 257–258, Ala-274, and Lys-278 each bind ATP; these read DSK, KF, and RK. Asp-251 contributes to the L-methionine binding site. L-methionine is bound at residue Lys-282.

It belongs to the AdoMet synthase family. As to quaternary structure, homotetramer; dimer of dimers. Requires Mg(2+) as cofactor. K(+) serves as cofactor.

The protein localises to the cytoplasm. It catalyses the reaction L-methionine + ATP + H2O = S-adenosyl-L-methionine + phosphate + diphosphate. Its pathway is amino-acid biosynthesis; S-adenosyl-L-methionine biosynthesis; S-adenosyl-L-methionine from L-methionine: step 1/1. Catalyzes the formation of S-adenosylmethionine (AdoMet) from methionine and ATP. The overall synthetic reaction is composed of two sequential steps, AdoMet formation and the subsequent tripolyphosphate hydrolysis which occurs prior to release of AdoMet from the enzyme. This chain is S-adenosylmethionine synthase, found in Nitrobacter hamburgensis (strain DSM 10229 / NCIMB 13809 / X14).